We begin with the raw amino-acid sequence, 417 residues long: Serine hydroxymethyltransferase (417 aa).

Residues leucine 121 and 125–127 each bind (6S)-5,6,7,8-tetrahydrofolate; that span reads GHL. At lysine 229 the chain carries N6-(pyridoxal phosphate)lysine. 355-357 provides a ligand contact to (6S)-5,6,7,8-tetrahydrofolate; sequence SPF.

This sequence belongs to the SHMT family. Homodimer. The cofactor is pyridoxal 5'-phosphate.

It localises to the cytoplasm. The catalysed reaction is (6R)-5,10-methylene-5,6,7,8-tetrahydrofolate + glycine + H2O = (6S)-5,6,7,8-tetrahydrofolate + L-serine. The protein operates within one-carbon metabolism; tetrahydrofolate interconversion. It participates in amino-acid biosynthesis; glycine biosynthesis; glycine from L-serine: step 1/1. Its function is as follows. Catalyzes the reversible interconversion of serine and glycine with tetrahydrofolate (THF) serving as the one-carbon carrier. This reaction serves as the major source of one-carbon groups required for the biosynthesis of purines, thymidylate, methionine, and other important biomolecules. Also exhibits THF-independent aldolase activity toward beta-hydroxyamino acids, producing glycine and aldehydes, via a retro-aldol mechanism. This Shewanella baltica (strain OS185) protein is Serine hydroxymethyltransferase.